Reading from the N-terminus, the 281-residue chain is Deoxyribonuclease-1 (281 aa).

Positions 1–21 (MRSEMLTALLTLAVLLQVAGS) are cleaved as a signal peptide. N39 is a glycosylation site (N-linked (GlcNAc...) asparagine). The active site involves E99. C122 and C125 are joined by a disulfide. H155 is a catalytic residue.

It belongs to the DNase I family. Requires Ca(2+) as cofactor. Mg(2+) is required as a cofactor. Equivalent levels in pancreas and parotid gland, low amounts in kidney, liver, small intestine, stomach and thymus.

The protein resides in the secreted. The protein localises to the zymogen granule. It is found in the nucleus envelope. The enzyme catalyses Endonucleolytic cleavage to 5'-phosphodinucleotide and 5'-phosphooligonucleotide end-products.. Its function is as follows. Serum endocuclease secreted into body fluids by a wide variety of exocrine and endocrine organs. Expressed by non-hematopoietic tissues and preferentially cleaves protein-free DNA. Among other functions, seems to be involved in cell death by apoptosis. Binds specifically to G-actin and blocks actin polymerization. Preferentially attacks double-stranded DNA and produces oligonucleotides with 5'-phospho and 3'-hydroxy termini. Together with DNASE1L3, plays a key role in degrading neutrophil extracellular traps (NETs). NETs are mainly composed of DNA fibers and are released by neutrophils to bind pathogens during inflammation. Degradation of intravascular NETs by DNASE1 and DNASE1L3 is required to prevent formation of clots that obstruct blood vessels and cause organ damage following inflammation. This Oryctolagus cuniculus (Rabbit) protein is Deoxyribonuclease-1 (DNASE1).